Consider the following 676-residue polypeptide: MGRFNVKFMIKDIEDEILCLRDNIRKWNKEYYVDSSPSVSDLTYDKALLRLQDLESKYPEYKTLDSPTLKFGSDLLNNFEEVTHSFPILSLDKAYDIKELLLWIEKMVLEGSSLGSYTGISVEPKIDGCSIVLYYKDGILQKALTRGDGRVGNDVTENVRTIKNVPLSIDEKVELVLRGEIYITKENFLKINHTLKNPYLNARNLASGILRRINSREVASFPLDIFVYDILYSSFGLSTNHDAFDKLKKFGFKINPFCKFFGGKNLEEITNHVKKIEMQRNSLEYEIDGVVLKVDSFILRDILGYTSHHPKWSVAYKFESCTGVSKIVDIVVQVGRSGKITPVAHVEKVFVAGAFITNASLHNQDYIDSIGLNVGDVVAISRRGDVIPAVELVVEKLSIGSFKISSNCPSCKMALIKEGSHLFCVNKHCPYRIIEQIKYFCSKKCMNIVGLSGKTIEFLFEMKFISSEIELYTFNFDRLINLRGFDLKRIDNLKRSISDSKGRPFRKLLLGMGIKELGANTILVLINNNLNSFDIISTLCKNKEAALAKLLKIKGIGEKIALNIIEAFNDKIILDKFNFFKELGFKLEEYNTNYVVDDSFLFGKKFCITGSFEGHSRDVLIEKITKKGAIFNRAVTKRLDFLLVGEKPGLKLQKANNLGIKTFGLFDIKDFVDLDN.

NAD(+) contacts are provided by residues 41–45 (DLTYD), 90–91 (SL), and Glu-123. Lys-125 acts as the N6-AMP-lysine intermediate in catalysis. Residues Arg-146, Glu-180, Lys-293, and Lys-317 each contribute to the NAD(+) site. Cys-408, Cys-411, Cys-424, and Cys-429 together coordinate Zn(2+).

The protein belongs to the NAD-dependent DNA ligase family. LigA subfamily. The cofactor is Mg(2+). Requires Mn(2+) as cofactor.

The catalysed reaction is NAD(+) + (deoxyribonucleotide)n-3'-hydroxyl + 5'-phospho-(deoxyribonucleotide)m = (deoxyribonucleotide)n+m + AMP + beta-nicotinamide D-nucleotide.. DNA ligase that catalyzes the formation of phosphodiester linkages between 5'-phosphoryl and 3'-hydroxyl groups in double-stranded DNA using NAD as a coenzyme and as the energy source for the reaction. It is essential for DNA replication and repair of damaged DNA. The sequence is that of DNA ligase from Borrelia turicatae (strain 91E135).